The primary structure comprises 77 residues: EMBRYO SURROUNDING FACTOR 1-like protein 6 (77 aa).

Residues 1 to 25 (MSPSHFAILFIIVISLVPLHGYANG) form the signal peptide. Disulfide bonds link Cys38-Cys53, Cys43-Cys72, Cys51-Cys68, and Cys54-Cys61.

It belongs to the MEG family.

The chain is EMBRYO SURROUNDING FACTOR 1-like protein 6 (ESFL6) from Arabidopsis thaliana (Mouse-ear cress).